A 542-amino-acid polypeptide reads, in one-letter code: CTP synthase (542 aa).

An amidoligase domain region spans residues 1–265 (MARYVFITGG…DDEVLAAFGI (265 aa)). Ser-13 is a CTP binding site. Ser-13 contributes to the UTP binding site. Residues 14 to 19 (SLGKGI) and Asp-71 each bind ATP. Positions 71 and 139 each coordinate Mg(2+). Residues 146 to 148 (DIE), 186 to 191 (KTKPTQ), and Lys-222 contribute to the CTP site. UTP-binding positions include 186–191 (KTKPTQ) and Lys-222. One can recognise a Glutamine amidotransferase type-1 domain in the interval 291 to 541 (TIAIVGKYTG…IEAATEQSRL (251 aa)). L-glutamine is bound at residue Gly-353. Cys-380 acts as the Nucleophile; for glutamine hydrolysis in catalysis. Residues 381 to 384 (FGMQ), Glu-404, and Arg-469 each bind L-glutamine. Catalysis depends on residues His-514 and Glu-516.

The protein belongs to the CTP synthase family. Homotetramer.

The enzyme catalyses UTP + L-glutamine + ATP + H2O = CTP + L-glutamate + ADP + phosphate + 2 H(+). It carries out the reaction L-glutamine + H2O = L-glutamate + NH4(+). It catalyses the reaction UTP + NH4(+) + ATP = CTP + ADP + phosphate + 2 H(+). Its pathway is pyrimidine metabolism; CTP biosynthesis via de novo pathway; CTP from UDP: step 2/2. Its activity is regulated as follows. Allosterically activated by GTP, when glutamine is the substrate; GTP has no effect on the reaction when ammonia is the substrate. The allosteric effector GTP functions by stabilizing the protein conformation that binds the tetrahedral intermediate(s) formed during glutamine hydrolysis. Inhibited by the product CTP, via allosteric rather than competitive inhibition. Catalyzes the ATP-dependent amination of UTP to CTP with either L-glutamine or ammonia as the source of nitrogen. Regulates intracellular CTP levels through interactions with the four ribonucleotide triphosphates. This Rhizobium etli (strain CIAT 652) protein is CTP synthase.